The chain runs to 242 residues: MAAPALRAPLRWSGLALGVRCAVWNLPGLTQVRGSRYAPEFREPLIDKEYYRKPVAELTEEEKYDQELKKTQFIKAAAATETSSVFADPVISKFTNMMMKGGNKVLARSLMAQTLEAVKRKQFEKYRAASAEEQATIERNPYRIFHEALKNCEPVIGLVPILKGGHFYQVPVPLADRRRRFLAMKWMITECRENKPRRTLMPEKLSHELLEAFHNRGPVIKRKHNMHKMAEANRALAHYRWW.

Residues 1–37 constitute a mitochondrion transit peptide; that stretch reads MAAPALRAPLRWSGLALGVRCAVWNLPGLTQVRGSRY. Lysine 228 is modified (N6-acetyllysine).

Belongs to the universal ribosomal protein uS7 family. Component of the mitochondrial ribosome small subunit (28S) which comprises a 12S rRNA and about 30 distinct proteins.

Its subcellular location is the mitochondrion. The polypeptide is Small ribosomal subunit protein uS7m (Mrps7) (Mus musculus (Mouse)).